A 941-amino-acid polypeptide reads, in one-letter code: Protocadherin alpha-12 (941 aa).

The N-terminal stretch at 1 to 29 is a signal peptide; sequence MVIIGPRGPGSQRLLLSLLLLAAWEVGSG. Cadherin domains lie at 30–133, 134–242, 243–350, 351–455, 456–565, and 581–678; these read QLHY…PPVF, RERE…GPAF, DKPS…VPEV, MVTS…APAF, AQPE…APAL, and VPRS…APKT. The Extracellular portion of the chain corresponds to 30 to 697; that stretch reads QLHYSVYEEA…DPEAALVDIN (668 aa). N-linked (GlcNAc...) asparagine glycans are attached at residues asparagine 257 and asparagine 265. An N-linked (GlcNAc...) asparagine glycan is attached at asparagine 548. Residues 698–718 form a helical membrane-spanning segment; sequence VYLIIAICAVSSLLVLTLLLY. Topologically, residues 719 to 941 are cytoplasmic; sequence TALRCSAPPT…GNSTTDNSDQ (223 aa). 5 PXXP repeats span residues 734–737, 790–793, 823–826, 863–866, and 882–885; these read PGKP, PRQP, PGGP, GPGN, and PGSP. Residues 734 to 885 are 5 X 4 AA repeats of P-X-X-P; the sequence is PGKPTLVCSS…PDKFIIPGSP (152 aa). The interval 818-941 is disordered; it reads ILRAGPGGPD…GNSTTDNSDQ (124 aa). Positions 900-914 are enriched in basic and acidic residues; it reads DKSDFITFGKKEETK.

The protein localises to the cell membrane. Its function is as follows. Potential calcium-dependent cell-adhesion protein. May be involved in the establishment and maintenance of specific neuronal connections in the brain. The sequence is that of Protocadherin alpha-12 (PCDHA12) from Homo sapiens (Human).